A 309-amino-acid chain; its full sequence is Aspartate carbamoyltransferase catalytic subunit (309 aa).

Carbamoyl phosphate is bound by residues R55 and T56. Position 85 (K85) interacts with L-aspartate. The carbamoyl phosphate site is built by R106, H135, and Q138. R168 and R230 together coordinate L-aspartate. Carbamoyl phosphate contacts are provided by L268 and P269.

This sequence belongs to the aspartate/ornithine carbamoyltransferase superfamily. ATCase family. As to quaternary structure, heterododecamer (2C3:3R2) of six catalytic PyrB chains organized as two trimers (C3), and six regulatory PyrI chains organized as three dimers (R2).

It carries out the reaction carbamoyl phosphate + L-aspartate = N-carbamoyl-L-aspartate + phosphate + H(+). It functions in the pathway pyrimidine metabolism; UMP biosynthesis via de novo pathway; (S)-dihydroorotate from bicarbonate: step 2/3. Its function is as follows. Catalyzes the condensation of carbamoyl phosphate and aspartate to form carbamoyl aspartate and inorganic phosphate, the committed step in the de novo pyrimidine nucleotide biosynthesis pathway. This is Aspartate carbamoyltransferase catalytic subunit from Vibrio cholerae serotype O1 (strain ATCC 39315 / El Tor Inaba N16961).